The chain runs to 157 residues: SsrA-binding protein (157 aa).

Residues 130-157 (KAEHDKRDTIKEREGKREVERVMKSRHR) are disordered.

The protein belongs to the SmpB family.

The protein resides in the cytoplasm. In terms of biological role, required for rescue of stalled ribosomes mediated by trans-translation. Binds to transfer-messenger RNA (tmRNA), required for stable association of tmRNA with ribosomes. tmRNA and SmpB together mimic tRNA shape, replacing the anticodon stem-loop with SmpB. tmRNA is encoded by the ssrA gene; the 2 termini fold to resemble tRNA(Ala) and it encodes a 'tag peptide', a short internal open reading frame. During trans-translation Ala-aminoacylated tmRNA acts like a tRNA, entering the A-site of stalled ribosomes, displacing the stalled mRNA. The ribosome then switches to translate the ORF on the tmRNA; the nascent peptide is terminated with the 'tag peptide' encoded by the tmRNA and targeted for degradation. The ribosome is freed to recommence translation, which seems to be the essential function of trans-translation. The polypeptide is SsrA-binding protein (Acidovorax sp. (strain JS42)).